Here is a 184-residue protein sequence, read N- to C-terminus: Probable RNA 2'-phosphotransferase (184 aa).

This sequence belongs to the KptA/TPT1 family.

Functionally, removes the 2'-phosphate from RNA via an intermediate in which the phosphate is ADP-ribosylated by NAD followed by a presumed transesterification to release the RNA and generate ADP-ribose 1''-2''-cyclic phosphate (APPR&gt;P). May function as an ADP-ribosylase. The sequence is that of Probable RNA 2'-phosphotransferase from Burkholderia pseudomallei (strain K96243).